A 256-amino-acid polypeptide reads, in one-letter code: Sugar fermentation stimulation protein homolog (256 aa).

Low complexity predominate over residues 128–141; the sequence is TGSTDTSFSGTPPT. Residues 128-149 are disordered; sequence TGSTDTSFSGTPPTNTEPANTK.

Belongs to the SfsA family.

The chain is Sugar fermentation stimulation protein homolog from Shewanella sediminis (strain HAW-EB3).